The primary structure comprises 84 residues: Omega-conotoxin-like ArMKLT1-02 (84 aa).

A signal peptide spans 1-22 (MKVTCMMIVAVLFLTAWTFVTA). The propeptide occupies 23-51 (DDSISALEDLFAKAHDKMENSEASPLNER). 3 disulfide bridges follow: C53/C71, C60/C75, and C70/C79.

This sequence belongs to the conotoxin O1 superfamily. In terms of tissue distribution, expressed by the venom duct.

The protein localises to the secreted. In terms of biological role, omega-conotoxins act at presynaptic membranes, they bind and block voltage-gated calcium channels (Cav). The chain is Omega-conotoxin-like ArMKLT1-02 from Conus arenatus (Sand-dusted cone).